Here is a 225-residue protein sequence, read N- to C-terminus: Phosphoenolpyruvate guanylyltransferase (225 aa).

Phosphoenolpyruvate is bound by residues Thr150, Gly166, and Ser169. The segment at 167-186 (PESARGHANSGARPLNGQWP) is disordered.

It belongs to the CofC family.

It carries out the reaction phosphoenolpyruvate + GTP + H(+) = enolpyruvoyl-2-diphospho-5'-guanosine + diphosphate. It functions in the pathway cofactor biosynthesis; coenzyme F420 biosynthesis. Functionally, guanylyltransferase that catalyzes the activation of phosphoenolpyruvate (PEP) as enolpyruvoyl-2-diphospho-5'-guanosine, via the condensation of PEP with GTP. It is involved in the biosynthesis of coenzyme F420, a hydride carrier cofactor. The protein is Phosphoenolpyruvate guanylyltransferase of Rhodococcus erythropolis (strain PR4 / NBRC 100887).